Consider the following 188-residue polypeptide: Ion-translocating oxidoreductase complex subunit B (188 aa).

The tract at residues 1–23 (MIEAAVSMSALGLGLGLLLGVAA) is hydrophobic. The 60-residue stretch at 29–88 (ESPPIVDAIEGILPGTNCGACGYPGCRGLAEAMSEGAAPVTACAPGGRDVALALAAIVET) folds into the 4Fe-4S domain. Cys46, Cys49, Cys54, Cys71, Cys113, Cys116, Cys119, Cys123, Cys143, Cys146, Cys149, and Cys153 together coordinate [4Fe-4S] cluster. 2 consecutive 4Fe-4S ferredoxin-type domains span residues 104-133 (TVAF…GANR) and 134-163 (QIHT…ARVK).

It belongs to the 4Fe4S bacterial-type ferredoxin family. RnfB subfamily. The complex is composed of six subunits: RnfA, RnfB, RnfC, RnfD, RnfE and RnfG. Requires [4Fe-4S] cluster as cofactor.

It is found in the cellular chromatophore membrane. In terms of biological role, part of a membrane-bound complex that couples electron transfer with translocation of ions across the membrane. This chain is Ion-translocating oxidoreductase complex subunit B, found in Cereibacter sphaeroides (strain ATCC 17023 / DSM 158 / JCM 6121 / CCUG 31486 / LMG 2827 / NBRC 12203 / NCIMB 8253 / ATH 2.4.1.) (Rhodobacter sphaeroides).